Consider the following 110-residue polypeptide: ATP synthase epsilon chain (110 aa).

Belongs to the ATPase epsilon chain family. In terms of assembly, F-type ATPases have 2 components, CF(1) - the catalytic core - and CF(0) - the membrane proton channel. CF(1) has five subunits: alpha(3), beta(3), gamma(1), delta(1), epsilon(1). CF(0) has three main subunits: a, b and c.

It is found in the cell inner membrane. Its function is as follows. Produces ATP from ADP in the presence of a proton gradient across the membrane. The sequence is that of ATP synthase epsilon chain from Rickettsia typhi (strain ATCC VR-144 / Wilmington).